A 97-amino-acid polypeptide reads, in one-letter code: Co-chaperonin GroES (97 aa).

It belongs to the GroES chaperonin family. As to quaternary structure, heptamer of 7 subunits arranged in a ring. Interacts with the chaperonin GroEL.

The protein localises to the cytoplasm. Functionally, together with the chaperonin GroEL, plays an essential role in assisting protein folding. The GroEL-GroES system forms a nano-cage that allows encapsulation of the non-native substrate proteins and provides a physical environment optimized to promote and accelerate protein folding. GroES binds to the apical surface of the GroEL ring, thereby capping the opening of the GroEL channel. The protein is Co-chaperonin GroES of Klebsiella pneumoniae subsp. pneumoniae (strain ATCC 700721 / MGH 78578).